A 228-amino-acid chain; its full sequence is Protein boule (228 aa).

Residues 33–110 (NRIFVGGISG…RKLNIAPAIK (78 aa)) enclose the RRM domain. The 28-residue stretch at 151–178 (PAAGVPAIYPPSAMQYQPFYQYYSVPMN) folds into the DAZ domain. The span at 193–214 (PLLHSPTSNPHSPHSQSHPQSP) shows a compositional bias: low complexity. The segment at 193–228 (PLLHSPTSNPHSPHSQSHPQSPCWSIEDLRDTLPRV) is disordered. The segment covering 219–228 (EDLRDTLPRV) has biased composition (basic and acidic residues).

Belongs to the RRM DAZ family. As to quaternary structure, interacts with the translational regulator orb2. As to expression, testis specific.

It is found in the nucleus. The protein localises to the cytoplasm. RNA-binding protein that plays a central role in spermatogenesis. Required for meiotic entry and germline differentiation, at the transition between G2 and M phases of meiosis I. Acts by regulating translation of specific mRNAs, possibly by binding to their 3'-UTR. Essential for translation of twine (twe) mRNA. Required for the expression of various genes such as CG6784, CG17210, CG15841 scpr-B, scpr-C, and rho-6. In Drosophila melanogaster (Fruit fly), this protein is Protein boule (bol).